We begin with the raw amino-acid sequence, 709 residues long: MQHIKLEFENLSEQYSFNYVAQAANGGILYQNGGSVLLASVCTQENEKYDDEFLPLSVQYIEKTYANNKFPSGFIKREGKPSEFEILTSRLIDRTLRPLFPKGYTYITSIVVMVLSYDGKSDLQLNALNAAACALYVSDLPLESLQDKAVSGVRIGRKDGHFIINPTMEQLSESELNLFVSGRDDELLMIEMKSIRTAQGANELSEENFLEALECAKNYIKNATQTYHQQFAPYKKSPFAFESANDELDEQLLNIIQTHYHTPITEAIKHMAKSERHTQLKALIKQVVRECEIEDEKKVQEHIMAYKRKLVREMILQSHIRADGRGLKDVRPISIQTNILPFAHGSVLFTRGQTQALVSATIGGDNDAQNYEMLGSKNALKKRFLFHYNFPSFSVGEASMIGSVGRRELGHGNLAKRALHSSVQEQDKTIRLVSEILESNGSSSMASVCGGSLALCACGIKVESLIAGVAMGLVTQDEQCAILTDISGLEDHDGDMDFKVAGGYKGISAMQMDIKLGGITQEILCQALFQAKEAREQILAIMEEARAKIVLNDVILPKSESFMIPPHKIVEVIGAGGRVIKDIIERFEVSIDLARESGMVSVSASNVENLQKAKTFILQLVSSAGTKKEYEKVDWESYAVGERFVGKIKKIVDFGIFVELPRGGDGLIHISKITKDKTQQLSEIFHNVSELECEILSQNKNKVELGLVE.

Residues D491 and D497 each contribute to the Mg(2+) site. A KH domain is found at 557-617; sequence PKSESFMIPP…ENLQKAKTFI (61 aa). Positions 641–709 constitute an S1 motif domain; sequence GERFVGKIKK…KNKVELGLVE (69 aa).

Belongs to the polyribonucleotide nucleotidyltransferase family. It depends on Mg(2+) as a cofactor.

The protein resides in the cytoplasm. It carries out the reaction RNA(n+1) + phosphate = RNA(n) + a ribonucleoside 5'-diphosphate. Functionally, involved in mRNA degradation. Catalyzes the phosphorolysis of single-stranded polyribonucleotides processively in the 3'- to 5'-direction. This Helicobacter hepaticus (strain ATCC 51449 / 3B1) protein is Polyribonucleotide nucleotidyltransferase.